A 223-amino-acid polypeptide reads, in one-letter code: Small heat shock protein hspI, mitochondrial (223 aa).

Residues 1-23 constitute a mitochondrion transit peptide; the sequence is MYKLSKTTPFFFRRAFLCGRRGG. Residues 109-223 form the sHSP domain; sequence KTRGFRSPKT…YVKSTTINVQ (115 aa).

It belongs to the small heat shock protein (HSP20) family.

It localises to the mitochondrion. The polypeptide is Small heat shock protein hspI, mitochondrial (hspI) (Dictyostelium discoideum (Social amoeba)).